The primary structure comprises 238 residues: Anti-sigma-K factor RskA (238 aa).

Residues 1-97 (MTSPQNDLLS…RSSSRRRAAA (97 aa)) lie on the Cytoplasmic side of the membrane. Residues 98 to 118 (VLSAAAAVVIGLGTLAVGYAL) form a helical membrane-spanning segment. At 119–238 (RPAPTPSTAE…TPVFAELPLT (120 aa)) the chain is on the extracellular side.

Belongs to the anti-sigma-K factor family.

It localises to the cell membrane. In terms of biological role, an anti-sigma factor for extracytoplasmic function (ECF) sigma factor SigK. ECF sigma factors are held in an inactive form by an anti-sigma factor until released by regulated intramembrane proteolysis (RIP). RIP occurs when an extracytoplasmic signal triggers a concerted proteolytic cascade to transmit information and elicit cellular responses. The membrane-spanning regulatory substrate protein is first cut extracytoplasmically (site-1 protease, S1P), then within the membrane itself (site-2 protease, S2P, Rip1), while cytoplasmic proteases finish degrading the regulatory protein, liberating the sigma factor. The chain is Anti-sigma-K factor RskA (rskA) from Mycolicibacterium vanbaalenii (strain DSM 7251 / JCM 13017 / BCRC 16820 / KCTC 9966 / NRRL B-24157 / PYR-1) (Mycobacterium vanbaalenii).